The sequence spans 292 residues: Phosphoenolpyruvate guanylyltransferase (292 aa).

3 residues coordinate phosphoenolpyruvate: Thr168, Gly184, and Ser187. Positions 243–292 (PLVAEDSGGSGGESGTSAESGLSVPPGIVGGTQRRIVSDASGPGRAKKYP) are disordered.

Belongs to the CofC family.

It carries out the reaction phosphoenolpyruvate + GTP + H(+) = enolpyruvoyl-2-diphospho-5'-guanosine + diphosphate. Its pathway is cofactor biosynthesis; coenzyme F420 biosynthesis. Guanylyltransferase that catalyzes the activation of phosphoenolpyruvate (PEP) as enolpyruvoyl-2-diphospho-5'-guanosine, via the condensation of PEP with GTP. It is involved in the biosynthesis of coenzyme F420, a hydride carrier cofactor. The protein is Phosphoenolpyruvate guanylyltransferase of Frankia casuarinae (strain DSM 45818 / CECT 9043 / HFP020203 / CcI3).